Consider the following 261-residue polypeptide: tRNA pseudouridine synthase A (261 aa).

Asp51 functions as the Nucleophile in the catalytic mechanism. Tyr109 is a substrate binding site.

This sequence belongs to the tRNA pseudouridine synthase TruA family. Homodimer.

It carries out the reaction uridine(38/39/40) in tRNA = pseudouridine(38/39/40) in tRNA. Functionally, formation of pseudouridine at positions 38, 39 and 40 in the anticodon stem and loop of transfer RNAs. The polypeptide is tRNA pseudouridine synthase A (Shewanella sediminis (strain HAW-EB3)).